The primary structure comprises 190 residues: Xanthine phosphoribosyltransferase 1 (190 aa).

Xanthine contacts are provided by L20 and N27. A 5-phospho-alpha-D-ribose 1-diphosphate-binding site is contributed by 129–133; the sequence is AQGCA. K157 provides a ligand contact to xanthine.

Belongs to the purine/pyrimidine phosphoribosyltransferase family. Xpt subfamily. In terms of assembly, homodimer.

It is found in the cytoplasm. The enzyme catalyses XMP + diphosphate = xanthine + 5-phospho-alpha-D-ribose 1-diphosphate. It functions in the pathway purine metabolism; XMP biosynthesis via salvage pathway; XMP from xanthine: step 1/1. Functionally, converts the preformed base xanthine, a product of nucleic acid breakdown, to xanthosine 5'-monophosphate (XMP), so it can be reused for RNA or DNA synthesis. The chain is Xanthine phosphoribosyltransferase 1 from Clostridium perfringens (strain ATCC 13124 / DSM 756 / JCM 1290 / NCIMB 6125 / NCTC 8237 / Type A).